Consider the following 442-residue polypeptide: Choline monooxygenase, chloroplastic (442 aa).

Residues 1-58 (MASSASMLINYPTTFCGVRNSSNPNNDQFSDQINIPSSLNNNINISKITSKTNKIIPK) constitute a chloroplast transit peptide. The 107-residue stretch at 123–229 (WQVAGYSDQI…VAIWGPFVLI (107 aa)) folds into the Rieske domain. Residues Cys165, His167, Cys184, and His187 each contribute to the [2Fe-2S] cluster site. Residues His290 and His295 each contribute to the Fe cation site.

The protein belongs to the choline monooxygenase family. [2Fe-2S] cluster is required as a cofactor. Fe cation serves as cofactor. The cofactor is Mg(2+).

It localises to the plastid. The protein localises to the chloroplast stroma. The catalysed reaction is choline + 2 reduced [2Fe-2S]-[ferredoxin] + O2 + 2 H(+) = betaine aldehyde hydrate + 2 oxidized [2Fe-2S]-[ferredoxin] + H2O. It participates in amine and polyamine biosynthesis; betaine biosynthesis via choline pathway; betaine aldehyde from choline (monooxygenase route): step 1/1. Its function is as follows. Catalyzes the first step of the osmoprotectant glycine betaine synthesis. This Amaranthus tricolor (Joseph's coat) protein is Choline monooxygenase, chloroplastic (CMO).